The primary structure comprises 386 residues: Zinc transporter 7-A (386 aa).

The Cytoplasmic segment spans residues 1 to 37 (MLPLSIKDDEYKPPKFNLARKVSGWIRSIFSDSTSRN). A helical membrane pass occupies residues 38–58 (LFCFLCLNLSFAFVELFYGIW). Over 59–67 (SNSLGLISD) the chain is Lumenal. A helical transmembrane segment spans residues 68–88 (SFHMFFDCTALLAGLAASVIS). Topologically, residues 89–102 (RWKTNEAFSYGYVR) are cytoplasmic. A helical membrane pass occupies residues 103 to 123 (AEVLAGFVNGLFLIFTAFFIF). Topologically, residues 124-140 (SEGVERALDTPEVHHER) are lumenal. Residues 141–161 (LLPVSIMGLLVNIIGIFVFQH) form a helical membrane-spanning segment. The tract at residues 161–222 (HGGGHGHSHE…GHSHDHSPKH (62 aa)) is his-rich loop. At 162–246 (GGGHGHSHES…KGSSKQILEG (85 aa)) the chain is on the cytoplasmic side. The segment at 167 to 239 (HSHESGHGHS…DEPPEEHKGS (73 aa)) is disordered. The segment covering 228-238 (CHDEPPEEHKG) has biased composition (basic and acidic residues). A helical membrane pass occupies residues 247 to 267 (VFLHIVADTLGSVGVIFSTIL). The Lumenal portion of the chain corresponds to 268 to 272 (MQRYG). The helical transmembrane segment at 273–293 (LMIADPICSMLIALLIFVSVI) threads the bilayer. At 294–386 (PLLKQSIGIL…LYVQIDFAAI (93 aa)) the chain is on the cytoplasmic side.

The protein belongs to the cation diffusion facilitator (CDF) transporter (TC 2.A.4) family. SLC30A subfamily. In terms of assembly, homooligomer.

The protein resides in the golgi apparatus membrane. The protein localises to the cytoplasmic vesicle. It localises to the golgi apparatus. It is found in the trans-Golgi network. Its subcellular location is the sarcoplasmic reticulum. The protein resides in the mitochondrion. The enzyme catalyses Zn(2+)(in) = Zn(2+)(out). In terms of biological role, zinc ion transporter mediating zinc entry from the cytosol into the lumen of organelles along the secretory pathway. By contributing to zinc ion homeostasis within the early secretory pathway, regulates the activation and folding of enzymes like alkaline phosphatases. This is Zinc transporter 7-A (slc30a7-a) from Xenopus laevis (African clawed frog).